Here is an 830-residue protein sequence, read N- to C-terminus: uncharacterized protein (830 aa).

The segment covering 1–12 has biased composition (basic and acidic residues); it reads MEKASKNKESGV. The tract at residues 1-61 is disordered; the sequence is MEKASKNKES…SIKSKNKKKT (61 aa). Residues 15–25 are compositionally biased toward polar residues; the sequence is ANNSFLQNFGV. The 185-residue stretch at 249 to 433 folds into the Helicase ATP-binding domain; that stretch reads TVSKSSASGG…YSLVKFLHIN (185 aa). Residue 262–269 participates in ATP binding; the sequence is DDMGLGKT. The short motif at 384-387 is the DEAH box element; it reads DEAH. The region spanning 662-816 is the Helicase C-terminal domain; that stretch reads EEDDTVRGLR…KSVFTSKKLT (155 aa). A Phosphoserine modification is found at S712.

The protein belongs to the SNF2/RAD54 helicase family.

It is found in the nucleus. This is an uncharacterized protein from Schizosaccharomyces pombe (strain 972 / ATCC 24843) (Fission yeast).